The following is a 454-amino-acid chain: Protein phosphatase 1F (454 aa).

The span at 1-12 shows a compositional bias: polar residues; sequence MSSGAPQKSSPM. The disordered stretch occupies residues 1–28; that stretch reads MSSGAPQKSSPMASGAEETPGFLDTLLQ. The PPM-type phosphatase domain occupies 156–413; it reads LVSIHAIRNT…DNITVMVVFL (258 aa). Mn(2+)-binding residues include Asp198, Gly199, Asp360, and Asp404. The segment at 419–454 is disordered; that stretch reads LLEGGNQGEGDPQAEGRRQDLPSSLPEPETQAPPRS. Residue Ser454 is modified to Phosphoserine.

Belongs to the PP2C family. As to quaternary structure, associates with FEM1B. Mg(2+) is required as a cofactor. It depends on Mn(2+) as a cofactor.

The catalysed reaction is O-phospho-L-seryl-[protein] + H2O = L-seryl-[protein] + phosphate. It carries out the reaction O-phospho-L-threonyl-[protein] + H2O = L-threonyl-[protein] + phosphate. Dephosphorylates and concomitantly deactivates CaM-kinase II activated upon autophosphorylation, and CaM-kinases IV and I activated upon phosphorylation by CaM-kinase kinase. Promotes apoptosis. This is Protein phosphatase 1F (PPM1F) from Homo sapiens (Human).